Here is a 442-residue protein sequence, read N- to C-terminus: NAD(P)H sulfur oxidoreductase (CoA-dependent) (442 aa).

13–14 (AA) is a binding site for FAD. Arg-24 provides a ligand contact to CoA. FAD contacts are provided by residues 35–36 (EA) and 42–44 (HAP). Residues 41–45 (SHAPC), 62–63 (HY), and Arg-72 each bind CoA. Cys-45 serves as the catalytic Redox-active. FAD-binding residues include Val-82, Asp-280, and Ala-298. Asn-302 and Lys-358 together coordinate CoA. Tyr-422 lines the FAD pocket. CoA contacts are provided by Trp-430 and Arg-438.

The protein belongs to the class-III pyridine nucleotide-disulfide oxidoreductase family. As to quaternary structure, homodimer. FAD is required as a cofactor.

Its subcellular location is the cytoplasm. The enzyme catalyses hydrogen sulfide + NADP(+) = sulfur + NADPH. It carries out the reaction hydrogen sulfide + NAD(+) = sulfur + NADH. The catalysed reaction is NADP(+) + 2 CoA = CoA-disulfide + NADPH + H(+). It catalyses the reaction NAD(+) + 2 CoA = CoA-disulfide + NADH + H(+). Functionally, catalyzes the CoA-dependent reduction of elemental sulfur (S(0)) to produce hydrogen sulfide. Can use both NADPH and NADH, but shows a preference for NADPH. May enable S(0) to be used, via sulfide, for iron-sulfur cluster synthesis by SipA. Also shows coenzyme A disulfide reductase (CoADR) activity with both NADH and NADPH. However, CoADR specific activity is about 20-fold lower than the sulfur reduction assay and CoADR activity appears to be an artifactual side reaction and is not thought to have any physiological relevance. Also shows NAD(P)H oxidase activity with both NADH and NADPH. This is NAD(P)H sulfur oxidoreductase (CoA-dependent) from Pyrococcus furiosus (strain ATCC 43587 / DSM 3638 / JCM 8422 / Vc1).